Reading from the N-terminus, the 299-residue chain is YjeF N-terminal domain-containing protein 3 (299 aa).

In terms of domain architecture, YjeF N-terminal spans 74–287 (AAALERELLE…DVRRKFALRL (214 aa)).

As to quaternary structure, interacts with APOA1. Binds to HDL. Expressed in theca cells in ovary and in Leydig cells in testis (at protein level). Also expressed in brain and mammary gland.

Functionally, may accelerate cholesterol efflux from endothelial cells to high-density lipoprotein (HDL) and thereby regulates angiogenesis. May orchestrate hematopoietic stem and progenitor cell emergence from the hemogenic endothelium, a type of specialized endothelium manifesting hematopoietic potential. YJEFN3-mediated cholesterol efflux activates endothelial SREBF2, the master transcription factor for cholesterol biosynthesis, which in turn transactivates NOTCH and promotes hematopoietic stem and progenitor cell emergence. May play a role in spermiogenesis and oogenesis. This chain is YjeF N-terminal domain-containing protein 3 (YJEFN3), found in Homo sapiens (Human).